A 155-amino-acid polypeptide reads, in one-letter code: Transcriptional repressor NrdR (155 aa).

The segment at 3-34 is a zinc-finger region; sequence CPFCGNIDTQVKDSRPAEDHVSIRRRRFCPAC. The ATP-cone domain occupies 49 to 139; that stretch reads LVVIKSSGKR…VYKNFQAADD (91 aa).

Belongs to the NrdR family. Requires Zn(2+) as cofactor.

Its function is as follows. Negatively regulates transcription of bacterial ribonucleotide reductase nrd genes and operons by binding to NrdR-boxes. The chain is Transcriptional repressor NrdR from Cereibacter sphaeroides (strain ATCC 17029 / ATH 2.4.9) (Rhodobacter sphaeroides).